We begin with the raw amino-acid sequence, 194 residues long: Type II restriction enzyme OkrAI (194 aa).

Mg(2+) is bound by residues Glu-71, Asp-86, and Trp-100. The active-site Proton acceptor is the Glu-101.

As to quaternary structure, homodimer. Mg(2+) is required as a cofactor.

The enzyme catalyses Endonucleolytic cleavage of DNA to give specific double-stranded fragments with terminal 5'-phosphates.. Its function is as follows. A P subtype restriction enzyme that recognizes the double-stranded sequence 5'-GGATCC-3' and cleaves after G-1. The chain is Type II restriction enzyme OkrAI from Oceanobacter kriegii (Oceanospirillum kriegii).